A 113-amino-acid polypeptide reads, in one-letter code: T cell receptor alpha variable 13-2 (113 aa).

A signal peptide spans 1 to 21 (MAGIRALFMYLWLQLDWVSRG). The Ig-like domain maps to 22 to 113 (ESVGLHLPTL…DSAVYFCAEN (92 aa)). A disulfide bridge links Cys43 with Cys110. Residue Asn87 is glycosylated (N-linked (GlcNAc...) asparagine).

Alpha-beta TR is a heterodimer composed of an alpha and beta chain; disulfide-linked. The alpha-beta TR is associated with the transmembrane signaling CD3 coreceptor proteins to form the TR-CD3 (TcR or TCR). The assembly of alpha-beta TR heterodimers with CD3 occurs in the endoplasmic reticulum where a single alpha-beta TR heterodimer associates with one CD3D-CD3E heterodimer, one CD3G-CD3E heterodimer and one CD247 homodimer forming a stable octameric structure. CD3D-CD3E and CD3G-CD3E heterodimers preferentially associate with TR alpha and TR beta chains, respectively. The association of the CD247 homodimer is the last step of TcR assembly in the endoplasmic reticulum and is required for transport to the cell surface.

It localises to the cell membrane. V region of the variable domain of T cell receptor (TR) alpha chain that participates in the antigen recognition. Alpha-beta T cell receptors are antigen specific receptors which are essential to the immune response and are present on the cell surface of T lymphocytes. Recognize peptide-major histocompatibility (MH) (pMH) complexes that are displayed by antigen presenting cells (APC), a prerequisite for efficient T cell adaptive immunity against pathogens. Binding of alpha-beta TR to pMH complex initiates TR-CD3 clustering on the cell surface and intracellular activation of LCK that phosphorylates the ITAM motifs of CD3G, CD3D, CD3E and CD247 enabling the recruitment of ZAP70. In turn ZAP70 phosphorylates LAT, which recruits numerous signaling molecules to form the LAT signalosome. The LAT signalosome propagates signal branching to three major signaling pathways, the calcium, the mitogen-activated protein kinase (MAPK) kinase and the nuclear factor NF-kappa-B (NF-kB) pathways, leading to the mobilization of transcription factors that are critical for gene expression and essential for T cell growth and differentiation. The T cell repertoire is generated in the thymus, by V-(D)-J rearrangement. This repertoire is then shaped by intrathymic selection events to generate a peripheral T cell pool of self-MH restricted, non-autoaggressive T cells. Post-thymic interaction of alpha-beta TR with the pMH complexes shapes TR structural and functional avidity. This chain is T cell receptor alpha variable 13-2, found in Homo sapiens (Human).